Consider the following 278-residue polypeptide: Urease accessory protein UreD (278 aa).

It belongs to the UreD family. In terms of assembly, ureD, UreF and UreG form a complex that acts as a GTP-hydrolysis-dependent molecular chaperone, activating the urease apoprotein by helping to assemble the nickel containing metallocenter of UreC. The UreE protein probably delivers the nickel.

The protein localises to the cytoplasm. In terms of biological role, required for maturation of urease via the functional incorporation of the urease nickel metallocenter. In Leptothrix cholodnii (strain ATCC 51168 / LMG 8142 / SP-6) (Leptothrix discophora (strain SP-6)), this protein is Urease accessory protein UreD.